A 205-amino-acid chain; its full sequence is Peptidyl-tRNA hydrolase (205 aa).

Tyr-18 contributes to the tRNA binding site. His-23 serves as the catalytic Proton acceptor. TRNA contacts are provided by Tyr-69, Asn-71, and Asn-117.

The protein belongs to the PTH family. In terms of assembly, monomer.

The protein localises to the cytoplasm. It catalyses the reaction an N-acyl-L-alpha-aminoacyl-tRNA + H2O = an N-acyl-L-amino acid + a tRNA + H(+). In terms of biological role, hydrolyzes ribosome-free peptidyl-tRNAs (with 1 or more amino acids incorporated), which drop off the ribosome during protein synthesis, or as a result of ribosome stalling. Its function is as follows. Catalyzes the release of premature peptidyl moieties from peptidyl-tRNA molecules trapped in stalled 50S ribosomal subunits, and thus maintains levels of free tRNAs and 50S ribosomes. This chain is Peptidyl-tRNA hydrolase, found in Synechococcus sp. (strain CC9605).